Reading from the N-terminus, the 778-residue chain is Lon protease (778 aa).

The region spanning 8–202 (LPLIPLRGLI…NVLTVIKDEL (195 aa)) is the Lon N-terminal domain. 354 to 361 (GPPGVGKT) is a binding site for ATP. The region spanning 591–772 (EDKIGVVTGM…DTVLENALIG (182 aa)) is the Lon proteolytic domain. Catalysis depends on residues Ser678 and Lys721.

It belongs to the peptidase S16 family. In terms of assembly, homohexamer. Organized in a ring with a central cavity.

The protein localises to the cytoplasm. It catalyses the reaction Hydrolysis of proteins in presence of ATP.. ATP-dependent serine protease that mediates the selective degradation of mutant and abnormal proteins as well as certain short-lived regulatory proteins. Required for cellular homeostasis and for survival from DNA damage and developmental changes induced by stress. Degrades polypeptides processively to yield small peptide fragments that are 5 to 10 amino acids long. Binds to DNA in a double-stranded, site-specific manner. This chain is Lon protease, found in Clostridium acetobutylicum (strain ATCC 824 / DSM 792 / JCM 1419 / IAM 19013 / LMG 5710 / NBRC 13948 / NRRL B-527 / VKM B-1787 / 2291 / W).